Consider the following 365-residue polypeptide: Methylthioribose-1-phosphate isomerase (365 aa).

Aspartate 255 functions as the Proton donor in the catalytic mechanism.

Belongs to the eIF-2B alpha/beta/delta subunits family. MtnA subfamily.

It localises to the cytoplasm. The protein resides in the nucleus. The catalysed reaction is 5-(methylsulfanyl)-alpha-D-ribose 1-phosphate = 5-(methylsulfanyl)-D-ribulose 1-phosphate. It functions in the pathway amino-acid biosynthesis; L-methionine biosynthesis via salvage pathway; L-methionine from S-methyl-5-thio-alpha-D-ribose 1-phosphate: step 1/6. In terms of biological role, catalyzes the interconversion of methylthioribose-1-phosphate (MTR-1-P) into methylthioribulose-1-phosphate (MTRu-1-P). The protein is Methylthioribose-1-phosphate isomerase of Drosophila willistoni (Fruit fly).